A 174-amino-acid chain; its full sequence is Actin-related protein 2/3 complex subunit 3 (174 aa).

It belongs to the ARPC3 family. In terms of assembly, component of the Arp2/3 complex composed of arpB/Arp2, arpC/Arp3, arcA/p41-arc, arcB/p34-arc, arcC/p21-arc, arcD/p20-arc and arcE/p16-arc. Interacts with carmil (via the region between the LRR domain and COOH-terminal proline-rich domain); carmil is required for Arp2/3-dependent actin nucleation. Arp2/3 complex, MyoB, MyoC, and the alpha and beta subunits of capping protein all form a larger complex with carmil.

The protein localises to the cytoplasm. The protein resides in the cytoskeleton. It is found in the cytosol. Its subcellular location is the cell cortex. It localises to the cell projection. The protein localises to the pseudopodium. Functions as a component of the Arp2/3 complex which is involved in regulation of actin polymerization and together with an activating nucleation-promoting factor (NPF) mediates the formation of branched actin networks. Seems to contact the pointed end of the daughter actin filament. The Arp2/3 complex is involved in organizing the actin system in cell motility and chemotaxis, in phagocytosis and macropinocytosis, at late steps of endosome processing, and in mitosis. In concert with a group of other proteins, the Arp2/3 complex plays a general role in the rapid activation and adaptation of the actin system to its multiple functions. The protein is Actin-related protein 2/3 complex subunit 3 (arcC) of Dictyostelium discoideum (Social amoeba).